A 404-amino-acid chain; its full sequence is Cysteine desulfurase IscS (404 aa).

Pyridoxal 5'-phosphate-binding positions include 75–76, asparagine 155, glutamine 183, and 203–205; these read AT and SAH. Lysine 206 carries the post-translational modification N6-(pyridoxal phosphate)lysine. Position 243 (threonine 243) interacts with pyridoxal 5'-phosphate. The active-site Cysteine persulfide intermediate is cysteine 328. Cysteine 328 contributes to the [2Fe-2S] cluster binding site.

This sequence belongs to the class-V pyridoxal-phosphate-dependent aminotransferase family. NifS/IscS subfamily. In terms of assembly, homodimer. Forms a heterotetramer with IscU, interacts with other sulfur acceptors. Pyridoxal 5'-phosphate is required as a cofactor.

The protein localises to the cytoplasm. The catalysed reaction is (sulfur carrier)-H + L-cysteine = (sulfur carrier)-SH + L-alanine. It participates in cofactor biosynthesis; iron-sulfur cluster biosynthesis. Functionally, master enzyme that delivers sulfur to a number of partners involved in Fe-S cluster assembly, tRNA modification or cofactor biosynthesis. Catalyzes the removal of elemental sulfur atoms from cysteine to produce alanine. Functions as a sulfur delivery protein for Fe-S cluster synthesis onto IscU, an Fe-S scaffold assembly protein, as well as other S acceptor proteins. This is Cysteine desulfurase IscS from Shewanella woodyi (strain ATCC 51908 / MS32).